The following is a 95-amino-acid chain: 6 kDa early secretory antigenic target (95 aa).

2 consecutive transmembrane segments (helical) span residues 11 to 43 and 49 to 85; these read IEAA…AAAW and EAYQ…AMAS. Residues 56 to 87 are a coiled coil; that stretch reads QKWDATATELNNALQNLARTISEAGQAMASTE.

The protein belongs to the WXG100 family. ESAT-6 subfamily. Forms a tight 1:1 complex with EsxB (CFP-10).

It is found in the secreted. Its subcellular location is the host membrane. A secreted protein. Acts as a strong host T-cell antigen. Plays a number of roles in modulating the host's immune response to infection as well as being responsible for bacterial escape into the host cytoplasm. This is 6 kDa early secretory antigenic target (esxA) from Mycobacterium bovis (strain ATCC BAA-935 / AF2122/97).